The primary structure comprises 171 residues: T-cell surface glycoprotein CD3 delta chain (171 aa).

An N-terminal signal peptide occupies residues 1 to 21 (MEHSTFLSGLVLATLLSQVSP). The Extracellular segment spans residues 22 to 105 (FKIPIEELED…CVELDPATVA (84 aa)). Cysteine 37 and cysteine 73 are oxidised to a cystine. N-linked (GlcNAc...) asparagine glycans are attached at residues asparagine 38 and asparagine 74. Residues 106–126 (GIIVTDVIATLLLALGVFCFA) form a helical membrane-spanning segment. At 127–171 (GHETGRLSGAADTQALLRNDQVYQPLRDRDDAQYSHLGGNWARNK) the chain is on the cytoplasmic side. In terms of domain architecture, ITAM spans 138–166 (DTQALLRNDQVYQPLRDRDDAQYSHLGGN). Tyrosine 149 and tyrosine 160 each carry phosphotyrosine.

The TCR-CD3 complex is composed of a CD3D/CD3E and a CD3G/CD3E heterodimers that preferentially associate with TCRalpha and TCRbeta, respectively, to form TCRalpha/CD3E/CD3G and TCRbeta/CD3G/CD3E trimers. In turn, the hexamer interacts with CD3Z homodimer to form the TCR-CD3 complex. Alternatively, TCRalpha and TCRbeta can be replaced by TCRgamma and TCRdelta. Interacts with coreceptors CD4 and CD8. Phosphorylated on Tyr residues after T-cell receptor triggering by LCK in association with CD4/CD8. In terms of tissue distribution, CD3D is mostly present on T-lymphocytes with its TCR-CD3 partners. Present also in fetal NK-cells.

It localises to the cell membrane. In terms of biological role, part of the TCR-CD3 complex present on T-lymphocyte cell surface that plays an essential role in adaptive immune response. When antigen presenting cells (APCs) activate T-cell receptor (TCR), TCR-mediated signals are transmitted across the cell membrane by the CD3 chains CD3D, CD3E, CD3G and CD3Z. All CD3 chains contain immunoreceptor tyrosine-based activation motifs (ITAMs) in their cytoplasmic domain. Upon TCR engagement, these motifs become phosphorylated by Src family protein tyrosine kinases LCK and FYN, resulting in the activation of downstream signaling pathways. In addition of this role of signal transduction in T-cell activation, CD3D plays an essential role in thymocyte differentiation. Indeed, participates in correct intracellular TCR-CD3 complex assembly and surface expression. In absence of a functional TCR-CD3 complex, thymocytes are unable to differentiate properly. Interacts with CD4 and CD8 and thus serves to establish a functional link between the TCR and coreceptors CD4 and CD8, which is needed for activation and positive selection of CD4 or CD8 T-cells. The chain is T-cell surface glycoprotein CD3 delta chain (CD3D) from Homo sapiens (Human).